The following is a 739-amino-acid chain: Ent-kaurene synthase-like 3 (739 aa).

Asp-475, Asp-479, Asn-619, Thr-623, and Glu-627 together coordinate Mg(2+). Residues 475–479 carry the DDXXD motif motif; sequence DDFFD.

This sequence belongs to the terpene synthase family. It depends on Mg(2+) as a cofactor. Expressed in roots and stems.

The sequence is that of Ent-kaurene synthase-like 3 (KSL3) from Oryza sativa subsp. japonica (Rice).